The chain runs to 415 residues: Mitogen-activated protein kinase mpkC (415 aa).

Residues 20 to 299 (YANLQPVGLG…AEQGLMHPWM (280 aa)) enclose the Protein kinase domain. Residues 26–34 (VGLGTAGVV) and Lys49 each bind ATP. Residue Asp141 is the Proton acceptor of the active site. Residue Thr171 is modified to Phosphothreonine. Positions 171–173 (TGY) match the TXY motif. Tyr173 is subject to Phosphotyrosine.

This sequence belongs to the protein kinase superfamily. Ser/Thr protein kinase family. MAP kinase subfamily. HOG1 sub-subfamily. It depends on Mg(2+) as a cofactor. In terms of processing, dually phosphorylated on Thr-171 and Tyr-173, which activates the enzyme.

It carries out the reaction L-seryl-[protein] + ATP = O-phospho-L-seryl-[protein] + ADP + H(+). It catalyses the reaction L-threonyl-[protein] + ATP = O-phospho-L-threonyl-[protein] + ADP + H(+). Activated by tyrosine and threonine phosphorylation. Mitogen-activated protein kinase required for growth on media where sorbitol or mannitol is the sole carbon source. The sequence is that of Mitogen-activated protein kinase mpkC (mpkC) from Emericella nidulans (strain FGSC A4 / ATCC 38163 / CBS 112.46 / NRRL 194 / M139) (Aspergillus nidulans).